The sequence spans 272 residues: Dickkopf-related protein 1 (272 aa).

Residues 1–31 form the signal peptide; the sequence is MMVVCAAAAVRFLAVFTMMALCSLPLLGASA. O-linked (GalNAc...) serine glycosylation occurs at serine 62. 10 disulfide bridges follow: cysteine 86–cysteine 98, cysteine 92–cysteine 114, cysteine 117–cysteine 131, cysteine 124–cysteine 136, cysteine 130–cysteine 141, cysteine 195–cysteine 207, cysteine 201–cysteine 216, cysteine 206–cysteine 243, cysteine 226–cysteine 251, and cysteine 245–cysteine 269. Positions 86–141 are DKK-type Cys-1; the sequence is CAEDEECGSDEYCSSPSRGAAGVGGVQICLACRKRRKRCMRHAMCCPGNYCKNGIC. The DKK-type Cys-2 stretch occupies residues 195–269; sequence CLRSSDCAAG…ASNSSRLHTC (75 aa). Asparagine 262 carries N-linked (GlcNAc...) asparagine glycosylation.

It belongs to the dickkopf family. In terms of assembly, interacts (via the C-terminal Cys-rich domain) with LRP5 (via beta-propeller regions 3 and 4); the interaction, enhanced by MESD and or KREMEN, antagonizes Wnt-mediated signaling. Interacts with LRP6. Forms a ternary complex with LRP6 and KREM1. Interacts with KREM1.

It is found in the secreted. Functionally, antagonizes canonical Wnt signaling by inhibiting LRP5/6 interaction with Wnt and by forming a ternary complex with the transmembrane protein KREMEN that promotes internalization of LRP5/6. Inhibits the pro-apoptotic function of KREMEN1 in a Wnt-independent manner, and has anti-apoptotic activity. Plays a role in limb development; attenuates Wnt signaling in the developing limb to allow normal limb patterning. The protein is Dickkopf-related protein 1 (Dkk1) of Mus musculus (Mouse).